A 276-amino-acid polypeptide reads, in one-letter code: Rhomboid protease GlpG (276 aa).

6 helical membrane passes run 94 to 114, 142 to 162, 169 to 189, 192 to 212, 229 to 249, and 250 to 270; these read GPVT…MSLI, IFMH…WYLG, LGSG…GYVQ, FSGP…GYVW, LIIF…GMSM, and ANGA…VDTL. The active-site Nucleophile is Ser201. His254 is a catalytic residue.

The protein belongs to the peptidase S54 family.

Its subcellular location is the cell inner membrane. The catalysed reaction is Cleaves type-1 transmembrane domains using a catalytic dyad composed of serine and histidine that are contributed by different transmembrane domains.. Functionally, rhomboid-type serine protease that catalyzes intramembrane proteolysis. The chain is Rhomboid protease GlpG from Salmonella agona (strain SL483).